The sequence spans 66 residues: Small ribosomal subunit protein bS21 (66 aa).

The protein belongs to the bacterial ribosomal protein bS21 family.

This is Small ribosomal subunit protein bS21 from Persephonella marina (strain DSM 14350 / EX-H1).